The following is a 66-amino-acid chain: Large ribosomal subunit protein bL31 (66 aa).

Zn(2+) contacts are provided by Cys-16, Cys-18, Cys-36, and Cys-39.

This sequence belongs to the bacterial ribosomal protein bL31 family. Type A subfamily. Part of the 50S ribosomal subunit. Requires Zn(2+) as cofactor.

In terms of biological role, binds the 23S rRNA. The sequence is that of Large ribosomal subunit protein bL31 from Geobacillus thermodenitrificans (strain NG80-2).